A 197-amino-acid polypeptide reads, in one-letter code: Na(+)-translocating NADH-quinone reductase subunit E (197 aa).

6 consecutive transmembrane segments (helical) span residues 11-31 (SVFI…FLAV), 35-55 (VSTA…SVPA), 76-96 (FLKF…LEMF), 108-128 (LGIY…VSFM), 139-159 (VVYG…LAGI), and 175-195 (LGIT…FSGI).

Belongs to the NqrDE/RnfAE family. In terms of assembly, composed of six subunits; NqrA, NqrB, NqrC, NqrD, NqrE and NqrF.

It is found in the cell inner membrane. The enzyme catalyses a ubiquinone + n Na(+)(in) + NADH + H(+) = a ubiquinol + n Na(+)(out) + NAD(+). Functionally, NQR complex catalyzes the reduction of ubiquinone-1 to ubiquinol by two successive reactions, coupled with the transport of Na(+) ions from the cytoplasm to the periplasm. NqrA to NqrE are probably involved in the second step, the conversion of ubisemiquinone to ubiquinol. The sequence is that of Na(+)-translocating NADH-quinone reductase subunit E from Neisseria meningitidis serogroup A / serotype 4A (strain DSM 15465 / Z2491).